A 250-amino-acid polypeptide reads, in one-letter code: MAGHSQFKNIMHRKGAQDAKRAKKFNKLAREITVSAKAGLPDPASNPRLRAAIQAARAENMPKDRIERAIKQGTPGADGANYEEVRYEGYGPGGVALIVEALTDNRNRTASEVRTAFTKFGGTLGETNSVSFMFNRIGQVVYPASVADADTVLEAAIEAGADDVQSDEGGHYISTAVDSLGEVRDALETRFGPPESAKLTWQPQNTVPVAAEDAAQSLMKLLDMLDDNDDVQTVLGNFDIPQDLLDKLNG.

The segment at 1-21 is disordered; the sequence is MAGHSQFKNIMHRKGAQDAKR.

Belongs to the TACO1 family.

The protein resides in the cytoplasm. In Rhodospirillum centenum (strain ATCC 51521 / SW), this protein is Probable transcriptional regulatory protein RC1_1808.